The primary structure comprises 254 residues: 2-dehydro-3-deoxy-D-gluconate 5-dehydrogenase (254 aa).

Y159 acts as the Proton acceptor in catalysis.

It belongs to the short-chain dehydrogenases/reductases (SDR) family.

The enzyme catalyses 2-dehydro-3-deoxy-D-gluconate + NAD(+) = 3-deoxy-D-glycero-2,5-hexodiulosonate + NADH + H(+). Involved in the degradation of 3,6-anhydro-L-galactose, which is the major monomeric sugar of red macroalgae. Catalyzes the fourth step of the pathway, the reduction of 3-deoxy-D-glycero-2,5-hexodiulosonate (L-DDGal) to 2-dehydro-3-deoxy-D-gluconate (KDG). The protein is 2-dehydro-3-deoxy-D-gluconate 5-dehydrogenase of Pseudoalteromonas atlantica (strain T6c / ATCC BAA-1087).